We begin with the raw amino-acid sequence, 250 residues long: Urease accessory protein UreG 3 (250 aa).

Residues 1-24 (MPDNASAQQPGQPAQGPNEHYHQP) form a disordered region. The span at 7–17 (AQQPGQPAQGP) shows a compositional bias: low complexity. 37–44 (GPVGTGKS) contributes to the GTP binding site. Residues 230–250 (GTHVPTDPGPMAPHSHSHDGS) form a disordered region.

The protein belongs to the SIMIBI class G3E GTPase family. UreG subfamily. Homodimer. UreD, UreF and UreG form a complex that acts as a GTP-hydrolysis-dependent molecular chaperone, activating the urease apoprotein by helping to assemble the nickel containing metallocenter of UreC. The UreE protein probably delivers the nickel.

The protein resides in the cytoplasm. Its function is as follows. Facilitates the functional incorporation of the urease nickel metallocenter. This process requires GTP hydrolysis, probably effectuated by UreG. The chain is Urease accessory protein UreG 3 from Streptomyces griseus subsp. griseus (strain JCM 4626 / CBS 651.72 / NBRC 13350 / KCC S-0626 / ISP 5235).